A 445-amino-acid chain; its full sequence is MSAIQSTQELLQPIGFDTPVAESKTVLLSPGKEWRARIPAESKLTIKIVYGIAELFGTELANGVEYTIQCANIAVYSVDHVKLEWKSLDELETTVSPDTNMPYLYNLHFALEKMRLSSFDGPRILVVGKASSGKTSLCKILCSYALKSKAYTPIYVNLNPQEGAFSPPGFLTATPISDILDVESTMWGQSMTTGATKLHNKQPMVKNFGLEMIAENRPLYMEVLGQLAQTVDGRLKNDPLVRRSGVIVDSPPLQHLDESYTELEVAITKFNIKTLVVCAPDDSLAVELSDRFQTLVRSIVRIPTSRGICNIDDVARRALQRSQIREYFYGNGSTVLSPYTIGVDLLDAVVWRPKSSLTIDMSKTSPNMVELERVEVTAANLQHALVAITYAPRKSTAEEVFRSGVLGVALITEVNDAKRKMRILLPVPGRLPDKAMILTAYRYLE.

ATP is bound by residues Glu-33 and 131 to 136; that span reads SSGKTS.

The protein belongs to the Clp1 family. Clp1 subfamily. As to quaternary structure, component of a pre-mRNA cleavage factor complex. Interacts directly with PCF11.

It is found in the nucleus. Functionally, required for endonucleolytic cleavage during polyadenylation-dependent pre-mRNA 3'-end formation. This chain is mRNA cleavage and polyadenylation factor CLP1, found in Eremothecium gossypii (strain ATCC 10895 / CBS 109.51 / FGSC 9923 / NRRL Y-1056) (Yeast).